The following is a 503-amino-acid chain: MIMTKQKNTLAERLNIGDEVRELKLGATFNPKNTSTAFHTIKYDFKPASVDTSRMASVDVGPNNQVTVIVPNSESSGVPHTVYKGNQREHAKECLMIYDKETGAITIEKLNHNIQVKKTRSEISSKSSHLPPQNAAIMQGQVPGQQISNGSGPSTNVASGHGPGSGAKLENSTMRITSKTKVSTGSRRNNIIDFKPRNSPMQQSSPSRPVAIHRSPQSAPAWDANNAQQTLPSIPMITDDDDFGLRAALHNGSQANTSGSSTGSAVGHSDYGSASSSSHMGKQRQAPHHGHAKRQQRSSPPMVQQQPNFGRNSYNGGNNYAQQQQHEQQRPSPYGHGNSMPMDLDSSRDHELTSKSVAHAAAVLEQQIGGALSASSSSSESDSSDSDSGSDSDDSTEDDRPSQQQQQHQHKAAQMHHQQQQQQQHHLQQQQQQQHFNQLPNLGLGSISPSYGNNHHQQQSRHHPHQQQQKQQSGIYASNGGFPNDLLQNDLQLSSNSSDEDDD.

2 stretches are compositionally biased toward polar residues: residues 143 to 158 (PGQQ…TNVA) and 170 to 189 (ENST…SRRN). Disordered regions lie at residues 143-223 (PGQQ…PAWD) and 251-503 (NGSQ…EDDD). A Phosphoserine modification is found at Ser-199. Positions 251-264 (NGSQANTSGSSTGS) are enriched in polar residues. Residues 281-296 (GKQRQAPHHGHAKRQQ) show a composition bias toward basic residues. Over residues 297 to 311 (RSSPPMVQQQPNFGR) the composition is skewed to polar residues. Positions 312–326 (NSYNGGNNYAQQQQH) are enriched in low complexity. Positions 382–397 (DSSDSDSGSDSDDSTE) are enriched in acidic residues. 2 stretches are compositionally biased toward low complexity: residues 415-435 (MHHQ…QQQH) and 484-497 (NDLL…SSNS).

It belongs to the EAF family.

Its subcellular location is the nucleus. Its function is as follows. Promotes transcriptional elongation by Su(Tpl)/ELL. Essential for development. The chain is Ell-associated factor Eaf from Drosophila ananassae (Fruit fly).